Here is a 312-residue protein sequence, read N- to C-terminus: Calcium-independent mitochondrial carrier protein SCaMC-3L (312 aa).

Solcar repeat units follow at residues 27 to 113 (GTLW…SKNF), 121 to 206 (QLFQ…LQCL), and 217 to 304 (PSGL…MKKT). 6 helical membrane passes run 33-50 (LLSG…TAPL), 88-107 (GNGI…FSVC), 131-144 (SLAV…INPM), 182-200 (YLPN…LAVY), 219-243 (GLVS…LTLV), and 279-298 (GMTP…YLVY).

This sequence belongs to the mitochondrial carrier (TC 2.A.29) family. In terms of tissue distribution, mainly expressed in testis and at lesser levels in brain.

The protein localises to the mitochondrion inner membrane. It carries out the reaction Mg(2+)(out) + phosphate(in) + ATP(out) = Mg(2+)(in) + phosphate(out) + ATP(in). The enzyme catalyses ADP(out) + phosphate(in) + H(+)(out) = ADP(in) + phosphate(out) + H(+)(in). Calcium-independent ATP-Mg/Pi exchanger that catalyzes the electroneutral exchange of Mg-ATP or free ADP against an hydrogenphosphate and participates in the net transport of adenine nucleotides across the mitochondria inner membrane. This is Calcium-independent mitochondrial carrier protein SCaMC-3L from Mus musculus (Mouse).